Here is a 302-residue protein sequence, read N- to C-terminus: UDP-N-acetylenolpyruvoylglucosamine reductase (302 aa).

The FAD-binding PCMH-type domain maps to 27 to 192; sequence KVGGAVDYLA…LSAKFALRPG (166 aa). Residue Arg-171 is part of the active site. Ser-221 functions as the Proton donor in the catalytic mechanism. The active site involves Glu-291.

The protein belongs to the MurB family. Requires FAD as cofactor.

The protein localises to the cytoplasm. The catalysed reaction is UDP-N-acetyl-alpha-D-muramate + NADP(+) = UDP-N-acetyl-3-O-(1-carboxyvinyl)-alpha-D-glucosamine + NADPH + H(+). Its pathway is cell wall biogenesis; peptidoglycan biosynthesis. Cell wall formation. This chain is UDP-N-acetylenolpyruvoylglucosamine reductase, found in Streptococcus suis (strain 98HAH33).